We begin with the raw amino-acid sequence, 65 residues long: Small, acid-soluble spore protein H 1 (65 aa).

It belongs to the SspH family.

Its subcellular location is the spore core. This is Small, acid-soluble spore protein H 1 from Clostridium botulinum (strain Langeland / NCTC 10281 / Type F).